The sequence spans 235 residues: MLKKKIPYITAILPAAGTGKRMKSLLPKQYCTIGDKTLIEHSMNALLCQSCIRHCIVVINARDHWFRQLSISYDPRVSVVVGGHTRADSVMAGLQHVKKSVWVIVHDAVRPCLHHEDLLRLFEITKFSQVGGILAIPICNTIKRTYCGTNFIRYTVNRENLWHALTPQLFNYDLLKYCLKKALKNRVTVTDEASALEYCGYKSIVIHGRSDNIKVTHQNDLKLANFYLSKLYKKT.

This sequence belongs to the IspD/TarI cytidylyltransferase family. IspD subfamily. In terms of assembly, homodimer.

The enzyme catalyses 2-C-methyl-D-erythritol 4-phosphate + CTP + H(+) = 4-CDP-2-C-methyl-D-erythritol + diphosphate. The protein operates within isoprenoid biosynthesis; isopentenyl diphosphate biosynthesis via DXP pathway; isopentenyl diphosphate from 1-deoxy-D-xylulose 5-phosphate: step 2/6. Functionally, catalyzes the formation of 4-diphosphocytidyl-2-C-methyl-D-erythritol from CTP and 2-C-methyl-D-erythritol 4-phosphate (MEP). This Blochmanniella pennsylvanica (strain BPEN) protein is 2-C-methyl-D-erythritol 4-phosphate cytidylyltransferase.